Here is a 575-residue protein sequence, read N- to C-terminus: Transport inhibitor response 1-like protein Os04g0395600 (575 aa).

Residues 1-45 (MTYFPEEVVEHIFSFLPAQRDRNTVSLVCKVWYEIERLSRRGVFV) enclose the F-box domain. Position 69 (Lys-69) interacts with 1D-myo-inositol hexakisphosphate. Positions 76 to 77 (DF) are interaction with auxin-responsive proteins. 1D-myo-inositol hexakisphosphate-binding positions include 108 to 109 (KR) and Arg-340. An interaction with auxin-responsive proteins region spans residues 343-348 (PSDFYV). 396-398 (RFR) serves as a coordination point for 1D-myo-inositol hexakisphosphate. The interval 400-404 (CILEP) is interaction with auxin-responsive proteins. Arg-431 contributes to the 1D-myo-inositol hexakisphosphate binding site. Residues 459 to 460 (AF) are interaction with auxin-responsive proteins. Residues 479–480 (RK) and Arg-504 contribute to the 1D-myo-inositol hexakisphosphate site.

In terms of assembly, part of a SCF (SKP1-cullin-F-box) protein ligase complex. May interact with auxin and auxin-responsive proteins.

It is found in the nucleus. The protein operates within protein modification; protein ubiquitination. The protein is Transport inhibitor response 1-like protein Os04g0395600 of Oryza sativa subsp. japonica (Rice).